The following is a 173-amino-acid chain: NADH-quinone oxidoreductase subunit B (173 aa).

Residues cysteine 46, cysteine 47, cysteine 112, and cysteine 142 each contribute to the [4Fe-4S] cluster site.

It belongs to the complex I 20 kDa subunit family. In terms of assembly, NDH-1 is composed of 14 different subunits. Subunits NuoB, C, D, E, F, and G constitute the peripheral sector of the complex. It depends on [4Fe-4S] cluster as a cofactor.

It is found in the cell membrane. The enzyme catalyses a quinone + NADH + 5 H(+)(in) = a quinol + NAD(+) + 4 H(+)(out). Functionally, NDH-1 shuttles electrons from NADH, via FMN and iron-sulfur (Fe-S) centers, to quinones in the respiratory chain. The immediate electron acceptor for the enzyme in this species is believed to be a menaquinone. Couples the redox reaction to proton translocation (for every two electrons transferred, four hydrogen ions are translocated across the cytoplasmic membrane), and thus conserves the redox energy in a proton gradient. This is NADH-quinone oxidoreductase subunit B from Desulfitobacterium hafniense (strain DSM 10664 / DCB-2).